We begin with the raw amino-acid sequence, 212 residues long: uncharacterized protein (212 aa).

Positions 97 to 151 (SDASEAKNDDRRSDGRFALYSVSDTPETTTASRSADRSTNPKTAKHPKSAAKPTV) are disordered. A compositionally biased stretch (basic and acidic residues) spans 100–111 (SEAKNDDRRSDG).

This is an uncharacterized protein from Mycobacterium tuberculosis (strain CDC 1551 / Oshkosh).